A 365-amino-acid polypeptide reads, in one-letter code: Spermine synthase (365 aa).

At Ala-2 the chain carries N-acetylalanine. Ser-57 is modified (phosphoserine). One can recognise a PABS domain in the interval Arg-121 to Lys-361. Gln-147 provides a ligand contact to S-adenosyl 3-(methylsulfanyl)propylamine. Spermidine contacts are provided by Tyr-176 and Asp-200. S-adenosyl 3-(methylsulfanyl)propylamine contacts are provided by residues Glu-219 and Asp-254–Cys-255. Residue Asp-275 is the Proton acceptor of the active site. Spermidine-binding residues include Tyr-350 and Glu-352.

Belongs to the spermidine/spermine synthase family. In terms of assembly, homodimer. Dimerization is mediated through the N-terminal domain and seems to be required for activity as deletion of the N-terminal domain causes complete loss of activity.

It carries out the reaction S-adenosyl 3-(methylsulfanyl)propylamine + spermidine = spermine + S-methyl-5'-thioadenosine + H(+). The protein operates within amine and polyamine biosynthesis; spermine biosynthesis; spermine from spermidine: step 1/1. In terms of biological role, catalyzes the production of spermine from spermidine and decarboxylated S-adenosylmethionine (dcSAM). The protein is Spermine synthase (SMS) of Bos taurus (Bovine).